We begin with the raw amino-acid sequence, 399 residues long: Probable endo-xylogalacturonan hydrolase A (399 aa).

Residues 1–19 form the signal peptide; it reads MTFGKAAFLSFSLFGASWA. PbH1 repeat units lie at residues 177 to 207, 208 to 229, 231 to 251, 260 to 283, and 293 to 314; these read TTNAVFSDMRLDATSKSENLPKNTDGFDIGE, STYVTISGTTVSNNDDCVAFKP, CNYLTVTDITCTGSHGLSVGS, VQNVRVEGATMISSTKAAGIKTYP, and VTNVTWKDITIQNCDYAIQIQS. Asp-222 (proton donor) is an active-site residue. The active site involves His-245. Residues Asn-295 and Asn-382 are each glycosylated (N-linked (GlcNAc...) asparagine).

The protein belongs to the glycosyl hydrolase 28 family.

The protein localises to the secreted. Functionally, pectinolytic enzyme involved in the degradation of xylogalacturonan (xga), a galacturonan backbone heavily substituted with xylose, and which is one important component of the hairy regions of pectin. Activity requires a galacturonic acid backbone substituted with xylose. The chain is Probable endo-xylogalacturonan hydrolase A (xghA) from Emericella nidulans (strain FGSC A4 / ATCC 38163 / CBS 112.46 / NRRL 194 / M139) (Aspergillus nidulans).